The chain runs to 83 residues: Transmembrane protein EP84R (83 aa).

The next 2 helical transmembrane spans lie at V31–L51 and A59–Y79.

The protein belongs to the asfivirus EP84R family.

Its subcellular location is the virion membrane. This chain is Transmembrane protein EP84R, found in Ornithodoros (relapsing fever ticks).